The chain runs to 521 residues: Phospholipase C B (521 aa).

Positions 1 to 39 (MGSEHPVDGMTRRQFFAKAAAATTAGAFMSLAGPIIEKA) form a signal peptide, tat-type signal. The interval 501 to 521 (FPQSMPTQETAPTRGIPSGLC) is disordered.

It belongs to the bacterial phospholipase C family. Predicted to be exported by the Tat system. The position of the signal peptide cleavage has not been experimentally proven.

The protein localises to the secreted. Its subcellular location is the cell wall. It catalyses the reaction a 1,2-diacyl-sn-glycero-3-phosphocholine + H2O = phosphocholine + a 1,2-diacyl-sn-glycerol + H(+). Involved in virulence. Induces cytotoxic effects on mouse macrophage cell lines, via direct or indirect enzymatic hydrolysis of cell membrane phospholipids. Hydrolyzes phosphatidylcholine. The sequence is that of Phospholipase C B from Mycobacterium tuberculosis (strain CDC 1551 / Oshkosh).